Reading from the N-terminus, the 348-residue chain is MLVDRVENNEKQQQQMASSSDAMSDSSLSDDEIIEHVVHGKEPKSTYELSWVSNAIAWSGALVWPLMLTVPLLLSSMYSPISYRQVFPESWYVYDTLSNCAPKPLGLVLGILAVAVGQVFVWIFFYLFKFGYLGTDPRSIQSKGAREYIFREGLLTHIGQPEGFVLLIGYLAITWMLKLMPQSYYSFEGTIQYKELFMCLVLQDGIQYTMHVLEHIVSPAFYQMSHKPHHRFTNPRLFDAFNGSLMDTFCMIIIPLFVTANLVRHCNVWTYMAFGSSYACWLTLIHSEYVFPWDGIFRKLGLGTPADHHVHHKFFKFNYGHLFMWFDQLGGTYRDPSGFAPRVFRENV.

The segment covering Met-1–Glu-10 has biased composition (basic and acidic residues). The disordered stretch occupies residues Met-1 to Ser-26. Residues Gln-12–Ser-26 are compositionally biased toward low complexity. Helical transmembrane passes span Ala-55–Ser-75, Leu-105–Phe-125, and Gly-153–Ile-173. A Fatty acid hydroxylase domain is found at Phe-197 to Thr-332. A Histidine box-1 motif is present at residues His-211–His-215. Residues His-226–His-230 carry the Histidine box-2 motif. Transmembrane regions (helical) follow at residues Gly-243–Val-263 and Ser-277–Phe-297. A Histidine box-3 motif is present at residues His-308–His-312.

Belongs to the sterol desaturase family. Interacts with cytochrome b5/PHATRDRAFT_30770. The cofactor is Fe cation.

It is found in the endoplasmic reticulum membrane. It carries out the reaction squalene + 2 Fe(II)-[cytochrome b5] + O2 + 2 H(+) = (S)-2,3-epoxysqualene + 2 Fe(III)-[cytochrome b5] + H2O. It functions in the pathway terpene metabolism; lanosterol biosynthesis; lanosterol from farnesyl diphosphate. The activity of this enzyme is not inhibited by terbinafine, an established inhibitor of the conventional flavoprotein squalene epoxidase. Functionally, catalyzes the stereospecific epoxidation of squalene at the terminal double bond to form (S)-2,3-epoxysqualene, the first oxygenation step in sterol biosynthesis. This Phaeodactylum tricornutum (strain CCAP 1055/1) protein is Alternative squalene epoxidase.